An 875-amino-acid polypeptide reads, in one-letter code: Kelch-like protein 29 (875 aa).

The segment covering Ile113 to Trp126 has biased composition (polar residues). Disordered regions lie at residues Ile113–Gly145 and Gly240–His291. Basic and acidic residues predominate over residues Pro131–Asp140. The span at Pro270–Ala280 shows a compositional bias: low complexity. The region spanning Thr329–Ser401 is the BTB domain. Kelch repeat units lie at residues Val585–Gly635, Asn637–Gly683, Lys684–Gly730, Ile732–Gly778, Phe779–Gly821, and Lys822–Lys870.

This is Kelch-like protein 29 (Klhl29) from Mus musculus (Mouse).